We begin with the raw amino-acid sequence, 458 residues long: UPF0210 protein MMP1427 (458 aa).

Belongs to the UPF0210 family.

The sequence is that of UPF0210 protein MMP1427 from Methanococcus maripaludis (strain DSM 14266 / JCM 13030 / NBRC 101832 / S2 / LL).